Here is a 589-residue protein sequence, read N- to C-terminus: Aspartate--tRNA ligase (589 aa).

Glu174 is a binding site for L-aspartate. The tract at residues Gln198–Lys201 is aspartate. Arg220 contacts L-aspartate. Residues Arg220 to Glu222 and Gln229 contribute to the ATP site. Residue His448 participates in L-aspartate binding. Glu483 contacts ATP. L-aspartate is bound at residue Arg490. Gly535–Arg538 provides a ligand contact to ATP.

It belongs to the class-II aminoacyl-tRNA synthetase family. Type 1 subfamily. As to quaternary structure, homodimer.

Its subcellular location is the cytoplasm. It carries out the reaction tRNA(Asp) + L-aspartate + ATP = L-aspartyl-tRNA(Asp) + AMP + diphosphate. In terms of biological role, catalyzes the attachment of L-aspartate to tRNA(Asp) in a two-step reaction: L-aspartate is first activated by ATP to form Asp-AMP and then transferred to the acceptor end of tRNA(Asp). The protein is Aspartate--tRNA ligase of Xylella fastidiosa (strain 9a5c).